The primary structure comprises 256 residues: Probable galactose dehydrogenase GalD (256 aa).

NAD(+)-binding positions include 20–23 (GGGS), 71–72 (DL), and asparagine 98. A substrate-binding site is contributed by serine 150. The active-site Proton acceptor is tyrosine 163. NAD(+) is bound by residues 163–167 (YSTAK) and isoleucine 196.

The protein belongs to the short-chain dehydrogenases/reductases (SDR) family.

Functionally, involved in the degradation of galactose via the DeLey-Doudoroff pathway. Catalyzes the oxidation of galactose in the presence of NAD(+). Uses NAD(+) as a hydrogen acceptor more efficiently than NADP(+). The chain is Probable galactose dehydrogenase GalD (galD) from Rhizobium meliloti (strain 1021) (Ensifer meliloti).